The sequence spans 545 residues: CTP synthase (545 aa).

The tract at residues 1–265 (MSKYIFVTGG…DDLVVQNLGL (265 aa)) is amidoligase domain. S13 is a binding site for CTP. Residue S13 participates in UTP binding. Residues 14–19 (SLGKGA) and D71 each bind ATP. Positions 71 and 139 each coordinate Mg(2+). CTP is bound by residues 146-148 (DIE), 186-191 (KTKPTQ), and K222. UTP contacts are provided by residues 186-191 (KTKPTQ) and K222. The region spanning 290-541 (VIALVGKYVG…MRAAIAQRER (252 aa)) is the Glutamine amidotransferase type-1 domain. G351 contacts L-glutamine. C378 acts as the Nucleophile; for glutamine hydrolysis in catalysis. L-glutamine is bound by residues 379-382 (LGMQ), E402, and R469. Active-site residues include H514 and E516.

The protein belongs to the CTP synthase family. Homotetramer.

It carries out the reaction UTP + L-glutamine + ATP + H2O = CTP + L-glutamate + ADP + phosphate + 2 H(+). It catalyses the reaction L-glutamine + H2O = L-glutamate + NH4(+). The enzyme catalyses UTP + NH4(+) + ATP = CTP + ADP + phosphate + 2 H(+). The protein operates within pyrimidine metabolism; CTP biosynthesis via de novo pathway; CTP from UDP: step 2/2. Its activity is regulated as follows. Allosterically activated by GTP, when glutamine is the substrate; GTP has no effect on the reaction when ammonia is the substrate. The allosteric effector GTP functions by stabilizing the protein conformation that binds the tetrahedral intermediate(s) formed during glutamine hydrolysis. Inhibited by the product CTP, via allosteric rather than competitive inhibition. Catalyzes the ATP-dependent amination of UTP to CTP with either L-glutamine or ammonia as the source of nitrogen. Regulates intracellular CTP levels through interactions with the four ribonucleotide triphosphates. This Acidithiobacillus ferrooxidans (strain ATCC 23270 / DSM 14882 / CIP 104768 / NCIMB 8455) (Ferrobacillus ferrooxidans (strain ATCC 23270)) protein is CTP synthase.